We begin with the raw amino-acid sequence, 569 residues long: Thiol:disulfide interchange protein DsbD (569 aa).

Positions 1-19 are cleaved as a signal peptide; it reads MAQRILTLILLLCSTSAFA. 2 disulfides stabilise this stretch: cysteine 122–cysteine 128 and cysteine 187–cysteine 309. 7 helical membrane-spanning segments follow: residues 168–188, 213–233, 248–268, 301–321, 328–348, 362–382, and 391–411; these read LPFSALWALLIGIGIAFTPCV, LLTFIYVQGMALTYTALGLVV, YVLIGLALVFTLLALSMFGLF, IAGLICSPCTTAPLSAILLYI, WLGGGTLYLYALGMGLPLILI, WMEHVKTAFGFVILALPVFLL, and GLRLWSLLGVAFFGWAFITSL. The Thioredoxin domain occupies 430–569; sequence LVSVRPLQDW…FSAHLRDRQP (140 aa). Cysteines 484 and 487 form a disulfide.

It belongs to the thioredoxin family. DsbD subfamily.

The protein localises to the cell inner membrane. It carries out the reaction [protein]-dithiol + NAD(+) = [protein]-disulfide + NADH + H(+). It catalyses the reaction [protein]-dithiol + NADP(+) = [protein]-disulfide + NADPH + H(+). In terms of biological role, required to facilitate the formation of correct disulfide bonds in some periplasmic proteins and for the assembly of the periplasmic c-type cytochromes. Acts by transferring electrons from cytoplasmic thioredoxin to the periplasm. This transfer involves a cascade of disulfide bond formation and reduction steps. This Citrobacter koseri (strain ATCC BAA-895 / CDC 4225-83 / SGSC4696) protein is Thiol:disulfide interchange protein DsbD.